The following is a 391-amino-acid chain: Succinyl-diaminopimelate desuccinylase (391 aa).

His78 serves as a coordination point for Zn(2+). Asp80 is a catalytic residue. Asp111 is a binding site for Zn(2+). The active-site Proton acceptor is the Glu145. 3 residues coordinate Zn(2+): Glu146, Glu174, and His360.

It belongs to the peptidase M20A family. DapE subfamily. As to quaternary structure, homodimer. It depends on Zn(2+) as a cofactor. Co(2+) serves as cofactor.

The catalysed reaction is N-succinyl-(2S,6S)-2,6-diaminopimelate + H2O = (2S,6S)-2,6-diaminopimelate + succinate. Its pathway is amino-acid biosynthesis; L-lysine biosynthesis via DAP pathway; LL-2,6-diaminopimelate from (S)-tetrahydrodipicolinate (succinylase route): step 3/3. In terms of biological role, catalyzes the hydrolysis of N-succinyl-L,L-diaminopimelic acid (SDAP), forming succinate and LL-2,6-diaminopimelate (DAP), an intermediate involved in the bacterial biosynthesis of lysine and meso-diaminopimelic acid, an essential component of bacterial cell walls. This chain is Succinyl-diaminopimelate desuccinylase, found in Albidiferax ferrireducens (strain ATCC BAA-621 / DSM 15236 / T118) (Rhodoferax ferrireducens).